A 196-amino-acid polypeptide reads, in one-letter code: Peptide methionine sulfoxide reductase (196 aa).

Positions 1–14 (MEGNNSSSKSTTNP) are enriched in polar residues. Positions 1-23 (MEGNNSSSKSTTNPALDPDLDSP) are disordered.

It belongs to the MsrA Met sulfoxide reductase family.

It catalyses the reaction L-methionyl-[protein] + [thioredoxin]-disulfide + H2O = L-methionyl-(S)-S-oxide-[protein] + [thioredoxin]-dithiol. The enzyme catalyses [thioredoxin]-disulfide + L-methionine + H2O = L-methionine (S)-S-oxide + [thioredoxin]-dithiol. In terms of biological role, has an important function as a repair enzyme for proteins that have been inactivated by oxidation. Catalyzes the reversible oxidation-reduction of methionine sulfoxide in proteins to methionine. The chain is Peptide methionine sulfoxide reductase (E4) from Solanum lycopersicum (Tomato).